A 635-amino-acid chain; its full sequence is DNA mismatch repair protein MutL (635 aa).

The interval 352 to 380 is disordered; the sequence is KAALQRGWVPPGAGRPGEGGGRAAPPPWR.

It belongs to the DNA mismatch repair MutL/HexB family.

Functionally, this protein is involved in the repair of mismatches in DNA. It is required for dam-dependent methyl-directed DNA mismatch repair. May act as a 'molecular matchmaker', a protein that promotes the formation of a stable complex between two or more DNA-binding proteins in an ATP-dependent manner without itself being part of a final effector complex. The sequence is that of DNA mismatch repair protein MutL from Symbiobacterium thermophilum (strain DSM 24528 / JCM 14929 / IAM 14863 / T).